We begin with the raw amino-acid sequence, 148 residues long: Large ribosomal subunit protein uL11 (148 aa).

Belongs to the universal ribosomal protein uL11 family. As to quaternary structure, part of the ribosomal stalk of the 50S ribosomal subunit. Interacts with L10 and the large rRNA to form the base of the stalk. L10 forms an elongated spine to which L12 dimers bind in a sequential fashion forming a multimeric L10(L12)X complex. Post-translationally, one or more lysine residues are methylated.

Functionally, forms part of the ribosomal stalk which helps the ribosome interact with GTP-bound translation factors. The protein is Large ribosomal subunit protein uL11 of Myxococcus xanthus (strain DK1622).